The following is a 531-amino-acid chain: Non-muscle caldesmon (531 aa).

The interval 20 to 200 (AYQRNDDDEE…LKGGNLGENQ (181 aa)) is myosin and calmodulin-binding. The segment at 21 to 379 (YQRNDDDEEE…KKPFKCFTPK (359 aa)) is disordered. Positions 41–50 (QERLRQKQEE) are enriched in basic and acidic residues. Residues 54-68 (GQVTDQVEAHVQNSA) show a composition bias toward polar residues. Positions 93 to 116 (RLARREERRQKRLQEALERQKEFD) are enriched in basic and acidic residues. Polar residues predominate over residues 120–133 (TDGSLSVPSRRMQN). A Phosphoserine modification is found at Ser-123. Basic and acidic residues predominate over residues 143-156 (GEEKGESRSGRYEM). Residues 162 to 172 (VITSYQKNSYQ) show a composition bias toward polar residues. Over residues 200 to 227 (QIKDEKIKKDKEPKEEVKNFLDRKKGFT) the composition is skewed to basic and acidic residues. Ser-249 is modified (phosphoserine; by CDK1). Basic and acidic residues-rich tracts occupy residues 271–297 (AGKRLEELRRRRGETESEEFEKLKQKQ) and 305–372 (EELK…DKKP). The interval 303–360 (ELEELKKKREERRKVLEEEEQRRKQEEADRKAREEEEKRRLKEEIERRRAEAAEKRQK) is tropomyosin-binding. Ser-382 is modified (phosphoserine). A Glycyl lysine isopeptide (Lys-Gly) (interchain with G-Cter in SUMO2) cross-link involves residue Lys-384. The segment at 392-424 (LNKSVQKSGVKSTHQAAVVSKIDSRLEQYTNAI) is strong actin-binding. The residue at position 395 (Ser-395) is a Phosphoserine. The tropomyosin-binding stretch occupies residues 402–412 (KSTHQAAVVSK). The segment at 454-460 (WEKGSVF) is calmodulin-binding. The disordered stretch occupies residues 458 to 531 (SVFSSPSASG…VDKVTSPTKV (74 aa)). A compositionally biased stretch (polar residues) spans 459–471 (VFSSPSASGTPNK). Ser-462 carries the post-translational modification Phosphoserine; by CDK1. At Thr-468 the chain carries Phosphothreonine; by CDK1. Residues Ser-491 and Ser-497 each carry the phosphoserine; by CDK1 modification. Residues 503 to 522 (SDLRPGDVSGKRNLWEKQSV) show a composition bias toward basic and acidic residues. The segment at 506 to 531 (RPGDVSGKRNLWEKQSVDKVTSPTKV) is weak actin-binding. At Ser-527 the chain carries Phosphoserine; by CDK1.

It belongs to the caldesmon family. In non-muscle cells, phosphorylation by CDK1 during mitosis causes caldesmon to dissociate from microfilaments. Phosphorylation reduces caldesmon binding to actin, myosin, and calmodulin as well as its inhibition of actomyosin ATPase activity. Phosphorylation also occurs in both quiescent and dividing smooth muscle cells with similar effects on the interaction with actin and calmodulin and on microfilaments reorganization. CDK1-mediated phosphorylation promotes Schwann cell migration during peripheral nerve regeneration. In terms of tissue distribution, high-molecular-weight caldesmon (h-caldesmon) is predominantly expressed in smooth muscles, whereas low-molecular-weight caldesmon (l-caldesmon) is widely distributed in non-muscle tissues and cells. Not expressed in skeletal muscle or heart.

Its subcellular location is the cytoplasm. The protein localises to the cytoskeleton. It localises to the myofibril. The protein resides in the stress fiber. Actin- and myosin-binding protein implicated in the regulation of actomyosin interactions in smooth muscle and nonmuscle cells (could act as a bridge between myosin and actin filaments). Stimulates actin binding of tropomyosin which increases the stabilization of actin filament structure. In muscle tissues, inhibits the actomyosin ATPase by binding to F-actin. This inhibition is attenuated by calcium-calmodulin and is potentiated by tropomyosin. Interacts with actin, myosin, two molecules of tropomyosin and with calmodulin. Also plays an essential role during cellular mitosis and receptor capping. Involved in Schwann cell migration during peripheral nerve regeneration. The polypeptide is Non-muscle caldesmon (Cald1) (Rattus norvegicus (Rat)).